A 348-amino-acid polypeptide reads, in one-letter code: MTAQPQVLKIRRPDDWHIHLRDGDMLKTVVPYTSELYGRAIVMPNLAPPVTTVDAAIAYRQRILDAVPTDHDFTPLMTCYLTDSLDPNEVECGFNEGVFTAAKLYPANATTNSSHGVTSIDAIMPVLERMEKLGMPLLVHGEVTHAEIDIFDREARFIETVMEPLRQRLQGLKVVFEHITTKDAAEYVRDGNELLAATITPQHLMFNRNHMLVGGVRPHLYCLPILKRNIHQQALRELVASGFTRAFLGTDSAPHARHRKEASCGCAGCFNAPTALASYATVFDEMGALEHFEAFASINGPRFYGLPLNETFIELERKESQVEESIALTDDTLIPFLAGEIVHWTVKR.

Zn(2+)-binding residues include H17 and H19. Residues 19–21 (HLR) and N45 contribute to the substrate site. Positions 103, 140, and 178 each coordinate Zn(2+). K103 bears the N6-carboxylysine mark. H140 contributes to the substrate binding site. L223 serves as a coordination point for substrate. Residue D251 coordinates Zn(2+). The active site involves D251. Substrate is bound by residues H255 and A267.

This sequence belongs to the metallo-dependent hydrolases superfamily. DHOase family. Class II DHOase subfamily. Homodimer. Requires Zn(2+) as cofactor.

The enzyme catalyses (S)-dihydroorotate + H2O = N-carbamoyl-L-aspartate + H(+). The protein operates within pyrimidine metabolism; UMP biosynthesis via de novo pathway; (S)-dihydroorotate from bicarbonate: step 3/3. Catalyzes the reversible cyclization of carbamoyl aspartate to dihydroorotate. This Enterobacter sp. (strain 638) protein is Dihydroorotase.